A 427-amino-acid polypeptide reads, in one-letter code: Serine--tRNA ligase (427 aa).

228 to 230 (TSE) contacts L-serine. 259 to 261 (RSE) serves as a coordination point for ATP. Glu-282 is an L-serine binding site. ATP is bound at residue 346 to 349 (EISS). An L-serine-binding site is contributed by Ser-384.

The protein belongs to the class-II aminoacyl-tRNA synthetase family. Type-1 seryl-tRNA synthetase subfamily. In terms of assembly, homodimer. The tRNA molecule binds across the dimer.

The protein localises to the cytoplasm. The enzyme catalyses tRNA(Ser) + L-serine + ATP = L-seryl-tRNA(Ser) + AMP + diphosphate + H(+). The catalysed reaction is tRNA(Sec) + L-serine + ATP = L-seryl-tRNA(Sec) + AMP + diphosphate + H(+). Its pathway is aminoacyl-tRNA biosynthesis; selenocysteinyl-tRNA(Sec) biosynthesis; L-seryl-tRNA(Sec) from L-serine and tRNA(Sec): step 1/1. Catalyzes the attachment of serine to tRNA(Ser). Is also able to aminoacylate tRNA(Sec) with serine, to form the misacylated tRNA L-seryl-tRNA(Sec), which will be further converted into selenocysteinyl-tRNA(Sec). The chain is Serine--tRNA ligase from Ehrlichia ruminantium (strain Welgevonden).